The chain runs to 261 residues: uncharacterized protein (261 aa).

It belongs to the BtpA family.

This is an uncharacterized protein from Methanocaldococcus jannaschii (strain ATCC 43067 / DSM 2661 / JAL-1 / JCM 10045 / NBRC 100440) (Methanococcus jannaschii).